The following is a 622-amino-acid chain: Putative E3 ubiquitin-protein ligase ORTHRUS 4 (622 aa).

A PHD-type zinc finger spans residues 12-62 (DGVCMRCQVTPPSEETLTCGTCVTPWHVSCLLPESLASSTGDWECPDCSGV). The RING-type 1 zinc-finger motif lies at 129–169 (CSICIQLPERPVTTPCGHNFCLKCFEKWAVGQGKLTCMICR). In terms of domain architecture, YDG spans 258–407 (TRNQGVLVGE…HKMCRYLFVR (150 aa)). The RING-type 2 zinc finger occupies 498–555 (CQICRKVLSLPVTTPCAHNFCKACLEAKFAGITQLRDRSNGVRKLRAKKNIMTCPCCT). A coiled-coil region spans residues 566 to 602 (QVNREMMEIIENFKKSEEEAEVAESSNISEEEEEESE). The disordered stretch occupies residues 579 to 622 (KKSEEEAEVAESSNISEEEEEESEPPTKKIKMDNNSVGDTSLSA). Over residues 611-622 (DNNSVGDTSLSA) the composition is skewed to polar residues.

The protein resides in the nucleus. It catalyses the reaction S-ubiquitinyl-[E2 ubiquitin-conjugating enzyme]-L-cysteine + [acceptor protein]-L-lysine = [E2 ubiquitin-conjugating enzyme]-L-cysteine + N(6)-ubiquitinyl-[acceptor protein]-L-lysine.. Its pathway is protein modification; protein ubiquitination. In terms of biological role, E3 ubiquitin-protein ligase. May participate in CpG methylation-dependent transcriptional regulation. The chain is Putative E3 ubiquitin-protein ligase ORTHRUS 4 (ORTH4) from Arabidopsis thaliana (Mouse-ear cress).